The sequence spans 159 residues: Cytochrome c-type biogenesis protein CcmE (159 aa).

The Cytoplasmic portion of the chain corresponds to 1–23 (MSSQSFHNSPSLRVILKQRKKKR). A helical; Signal-anchor for type II membrane protein transmembrane segment spans residues 24–44 (LLIVLFCCLIIAIATSLITYA). Over 45–159 (LRNTVSFFRM…RLNKHHRVEK (115 aa)) the chain is Periplasmic. Residues His138 and Tyr142 each coordinate heme.

Belongs to the CcmE/CycJ family.

The protein localises to the cell inner membrane. In terms of biological role, heme chaperone required for the biogenesis of c-type cytochromes. Transiently binds heme delivered by CcmC and transfers the heme to apo-cytochromes in a process facilitated by CcmF and CcmH. The protein is Cytochrome c-type biogenesis protein CcmE of Bartonella henselae (strain ATCC 49882 / DSM 28221 / CCUG 30454 / Houston 1) (Rochalimaea henselae).